The primary structure comprises 210 residues: Outer-membrane lipoprotein LolB (210 aa).

Residues 1-26 form the signal peptide; the sequence is MSKLKIDTKRRFSLLIALVLIISLSS. A lipid anchor (N-palmitoyl cysteine) is attached at C27. C27 carries S-diacylglycerol cysteine lipidation.

This sequence belongs to the LolB family. In terms of assembly, monomer.

It localises to the cell outer membrane. Functionally, plays a critical role in the incorporation of lipoproteins in the outer membrane after they are released by the LolA protein. This Francisella tularensis subsp. novicida (strain U112) protein is Outer-membrane lipoprotein LolB.